Consider the following 218-residue polypeptide: 3-dehydroquinate dehydratase (218 aa).

Residues 29 to 31 and arginine 56 contribute to the 3-dehydroquinate site; that span reads EFR. The Proton donor/acceptor role is filled by histidine 116. Lysine 142 acts as the Schiff-base intermediate with substrate in catalysis. Positions 180, 200, and 204 each coordinate 3-dehydroquinate.

The protein belongs to the type-I 3-dehydroquinase family. In terms of assembly, homodimer.

It catalyses the reaction 3-dehydroquinate = 3-dehydroshikimate + H2O. The protein operates within metabolic intermediate biosynthesis; chorismate biosynthesis; chorismate from D-erythrose 4-phosphate and phosphoenolpyruvate: step 3/7. Its function is as follows. Involved in the third step of the chorismate pathway, which leads to the biosynthesis of aromatic amino acids. Catalyzes the cis-dehydration of 3-dehydroquinate (DHQ) and introduces the first double bond of the aromatic ring to yield 3-dehydroshikimate. In Methanococcus vannielii (strain ATCC 35089 / DSM 1224 / JCM 13029 / OCM 148 / SB), this protein is 3-dehydroquinate dehydratase.